The primary structure comprises 95 residues: FMRFamide-like neuropeptides 16 (95 aa).

A signal peptide spans 1–24 (MSLSGFEFSSIIAVLLLLIQLSSA). Positions 25-58 (AVLPVDYASQYGVASADEMTALPEEGSLFAERPA) are excised as a propeptide. Residues Phe-67, Phe-77, and Phe-87 each carry the phenylalanine amide modification. The propeptide occupies 90–95 (SAPFEQ).

The protein belongs to the FARP (FMRFamide related peptide) family.

It is found in the secreted. Its function is as follows. FMRFamides and FMRFamide-like peptides are neuropeptides. AQTFVRF-amide inhibits the activity of dissected pharyngeal myogenic muscle system. This is FMRFamide-like neuropeptides 16 (flp-16) from Caenorhabditis briggsae.